The following is a 225-amino-acid chain: UPF0758 protein Swoo_4561 (225 aa).

The MPN domain occupies Ile102 to Ile224. Residues His173, His175, and Asp186 each coordinate Zn(2+). The JAMM motif signature appears at His173–Asp186.

Belongs to the UPF0758 family.

This chain is UPF0758 protein Swoo_4561, found in Shewanella woodyi (strain ATCC 51908 / MS32).